Consider the following 1194-residue polypeptide: Protein argonaute 3 (1194 aa).

Residues 1 to 98 (MDRGGYRGGR…GRGGGGDRGR (98 aa)) show a composition bias toward basic and acidic residues. Disordered regions lie at residues 1-277 (MDRG…VSQS) and 299-341 (TVLP…DKGG). The segment covering 142–158 (PPSSSQAQVSQGVAPGD) has biased composition (low complexity). A compositionally biased stretch (basic and acidic residues) spans 167–180 (VGRDGVGDVGRDGV). The span at 181–214 (GDVGQGGVGDVGQVGVGDVGQGGVGDVGQGGVGD) shows a compositional bias: gly residues. The span at 215 to 228 (VGRDGVGDVGRDGV) shows a compositional bias: basic and acidic residues. The span at 229–238 (GDVGRGGVGD) shows a compositional bias: gly residues. Low complexity-rich tracts occupy residues 256-277 (QLQQ…VSQS) and 299-316 (TVLP…HTAS). Positions 317 to 326 (GSQVMTPKPS) are enriched in polar residues. Residues 327-341 (SSDKKEPVKRPDKGG) show a composition bias toward basic and acidic residues. In terms of domain architecture, PAZ spans 540-656 (SVIEYLKLYF…VPMEFCNLVE (117 aa)). In terms of domain architecture, Piwi spans 841–1145 (LVLCAMTGKH…AASRGRVYYE (305 aa)).

This sequence belongs to the argonaute family. Ago subfamily.

Its function is as follows. Involved in RNA-mediated post-transcriptional gene silencing (PTGS). Main component of the RNA-induced silencing complex (RISC) that binds to a short guide RNA such as a microRNA (miRNA) or small interfering RNA (siRNA). RISC uses the mature miRNA or siRNA as a guide for slicer-directed cleavage of homologous mRNAs to repress gene expression. This is Protein argonaute 3 (AGO3) from Arabidopsis thaliana (Mouse-ear cress).